Consider the following 210-residue polypeptide: UPF0173 protein PF0020 (210 aa).

It belongs to the UPF0173 family.

This chain is UPF0173 protein PF0020, found in Pyrococcus furiosus (strain ATCC 43587 / DSM 3638 / JCM 8422 / Vc1).